A 65-amino-acid polypeptide reads, in one-letter code: Small, acid-soluble spore protein H 1 (65 aa).

It belongs to the SspH family.

Its subcellular location is the spore core. This is Small, acid-soluble spore protein H 1 from Clostridium botulinum (strain Langeland / NCTC 10281 / Type F).